We begin with the raw amino-acid sequence, 376 residues long: Queuine tRNA-ribosyltransferase (376 aa).

The active-site Proton acceptor is aspartate 92. Substrate-binding positions include 92 to 96, aspartate 146, glutamine 190, and glycine 217; that span reads DSGGF. Residues 248 to 254 are RNA binding; the sequence is GVGRPED. Aspartate 267 acts as the Nucleophile in catalysis. An RNA binding; important for wobble base 34 recognition region spans residues 272–276; that stretch reads TRNAR. 4 residues coordinate Zn(2+): cysteine 305, cysteine 307, cysteine 310, and histidine 337.

It belongs to the queuine tRNA-ribosyltransferase family. As to quaternary structure, homodimer. Within each dimer, one monomer is responsible for RNA recognition and catalysis, while the other monomer binds to the replacement base PreQ1. The cofactor is Zn(2+).

The enzyme catalyses 7-aminomethyl-7-carbaguanine + guanosine(34) in tRNA = 7-aminomethyl-7-carbaguanosine(34) in tRNA + guanine. The protein operates within tRNA modification; tRNA-queuosine biosynthesis. In terms of biological role, catalyzes the base-exchange of a guanine (G) residue with the queuine precursor 7-aminomethyl-7-deazaguanine (PreQ1) at position 34 (anticodon wobble position) in tRNAs with GU(N) anticodons (tRNA-Asp, -Asn, -His and -Tyr). Catalysis occurs through a double-displacement mechanism. The nucleophile active site attacks the C1' of nucleotide 34 to detach the guanine base from the RNA, forming a covalent enzyme-RNA intermediate. The proton acceptor active site deprotonates the incoming PreQ1, allowing a nucleophilic attack on the C1' of the ribose to form the product. After dissociation, two additional enzymatic reactions on the tRNA convert PreQ1 to queuine (Q), resulting in the hypermodified nucleoside queuosine (7-(((4,5-cis-dihydroxy-2-cyclopenten-1-yl)amino)methyl)-7-deazaguanosine). The chain is Queuine tRNA-ribosyltransferase from Stenotrophomonas maltophilia (strain R551-3).